The following is a 228-amino-acid chain: MSTSDAAATVIPIDDVPRQHGKAPAVDTVTAAPPPLAAAAPPAATTAPRKTRVPFFRRADRGSRCVALLDLVLRVAAFGPALAAAIATGTSDETLSVFTQFFQFHARFDDFPALLFFMVANAIAAGYLVLSLPFSAVVVLRPQAIGLRHLLLICDLIIAALLTAAAAAAAAIVDLAHSGNQRANWVPICMQFHGFCQRTSGAVVASFLAVLVLLFLVILAAFTIRKRC.

The Cytoplasmic portion of the chain corresponds to Met-1–Cys-65. The helical transmembrane segment at Val-66–Ile-86 threads the bilayer. At Ala-87–Ala-113 the chain is on the extracellular side. The helical transmembrane segment at Leu-114–Phe-134 threads the bilayer. Residues Ser-135–His-149 are Cytoplasmic-facing. A helical membrane pass occupies residues Leu-150–Ala-170. The Extracellular portion of the chain corresponds to Ala-171 to Gly-201. Residues Ala-202–Phe-222 form a helical membrane-spanning segment. At Thr-223–Cys-228 the chain is on the cytoplasmic side.

The protein belongs to the Casparian strip membrane proteins (CASP) family. Homodimer and heterodimers.

It is found in the cell membrane. Its function is as follows. Regulates membrane-cell wall junctions and localized cell wall deposition. Required for establishment of the Casparian strip membrane domain (CSD) and the subsequent formation of Casparian strips, a cell wall modification of the root endodermis that determines an apoplastic barrier between the intraorganismal apoplasm and the extraorganismal apoplasm and prevents lateral diffusion. The chain is Casparian strip membrane protein 2 from Zea mays (Maize).